Here is a 596-residue protein sequence, read N- to C-terminus: Ubiquilin-4 (596 aa).

The region spanning 13–87 (IRVTVKTPKD…VHLVIKTPQK (75 aa)) is the Ubiquitin-like domain. Glycyl lysine isopeptide (Lys-Gly) (interchain with G-Cter in SUMO2) cross-links involve residues Lys-23 and Lys-62. The interval 89 to 148 (QDPVTAAASPPSTPDSASAPSTTPASPAAAPVQPCSSGNTTSDAGSGGGPSPVAAEGPSS) is disordered. Low complexity-rich tracts occupy residues 93 to 119 (TAAASPPSTPDSASAPSTTPASPAAAP) and 139 to 148 (SPVAAEGPSS). Phosphoserine is present on Ser-139. STI1 domains lie at 187 to 224 (NPEMLSQIMENPLVQDMMSNPDLMRHMIMANPQMQQLM) and 225 to 256 (ERNPEISHMLNNPELMRQTMELARNPAMMQEM). Thr-282 carries the post-translational modification Phosphothreonine. A disordered region spans residues 297-361 (GNNPFSSLAG…QVHPTVSNPF (65 aa)). Positions 302 to 313 (SSLAGNSDNSSS) are enriched in low complexity. At Ser-313 the chain carries Phosphoserine. Pro residues predominate over residues 324–335 (LPNPWSPSPPTS). Residues 339 to 349 (GSGGEGTGGSG) show a composition bias toward gly residues. Polar residues predominate over residues 352-361 (QVHPTVSNPF). 2 consecutive STI1 domains span residues 388 to 435 (NPQL…QEQL) and 439 to 471 (LPVFLQQMQNPESLSILTNPRAMQALLQIQQGL). The disordered stretch occupies residues 482–528 (VPSLGSFGTPRTSVPLAGSNSGSSAEAPTSSPGVPATSPPSAGSNAQ). Positions 499–513 (GSNSGSSAEAPTSSP) are enriched in polar residues. The UBA domain maps to 548–593 (PMPEVRFQQQLEQLNSMGFINREANLQALIATGGDINAAIERLLGS).

Homooligomer. Binds signal sequences of proteins that are targeted to the endoplasmic reticulum. Interacts (via UBA domain) with GJA1 (not ubiquitinated) and with ubiquitin; both compete for the same binding site. Interacts (via UBA domain) with ubiquitin and with polyubiquitin chains. Interacts (via ubiquitin-like domain) with PSMD2 and PSMD4, regulatory subunits of the 26S proteasome. Interacts with ATXN1/SCA1; interaction with ATXN1 inhibits polyubiquitination of UBQLN4 and interferes with PSMD4 binding. Interacts with HERPUD1. Interacts (via ubiquitin-like domain) with UBQLN1 (via UBA domain). Interacts with UBQLN2. Interacts (via STI1 1 and 2 domains) with MAP1LC3A/B/C. Interacts with BAG6. Interacts with MRE11 (when ubiquitinated); interaction with ubiquitinated MRE11 leads to MRE11 removal from chromatin. Interacts with DESI1/POST; leading to nuclear export. Interacts with BCL2A1 and BCL2L10. In terms of processing, phosphorylated by ATM at Ser-313 in response to DNA damage, leading to localization in the nucleus and recruitment to sites of DNA damage. Ubiquitinated; this does not lead to proteasomal degradation. May undergo both 'Lys-48'- and 'Lys-63'-linked polyubiquitination. As to expression, detected in testis, ovary, thyroid, kidney, thymus, heart, liver, lung and spleen (at protein level). Highly expressed in heart, skeletal muscle, kidney, liver and brain. Detected at lower levels in testis, lung and spleen.

It localises to the nucleus. The protein resides in the cytoplasm. The protein localises to the chromosome. It is found in the endoplasmic reticulum. Its subcellular location is the perinuclear region. It localises to the cytoplasmic vesicle. The protein resides in the autophagosome. Functionally, regulator of protein degradation that mediates the proteasomal targeting of misfolded, mislocalized or accumulated proteins. Acts by binding polyubiquitin chains of target proteins via its UBA domain and by interacting with subunits of the proteasome via its ubiquitin-like domain. Key regulator of DNA repair that represses homologous recombination repair: in response to DNA damage, recruited to sites of DNA damage following phosphorylation by ATM and acts by binding and removing ubiquitinated MRE11 from damaged chromatin, leading to MRE11 degradation by the proteasome. MRE11 degradation prevents homologous recombination repair, redirecting double-strand break repair toward non-homologous end joining (NHEJ). Specifically recognizes and binds mislocalized transmembrane-containing proteins and targets them to proteasomal degradation. Collaborates with DESI1/POST in the export of ubiquitinated proteins from the nucleus to the cytoplasm. Plays a role in the regulation of the proteasomal degradation of non-ubiquitinated GJA1. Acts as an adapter protein that recruits UBQLN1 to the autophagy machinery. Mediates the association of UBQLN1 with autophagosomes and the autophagy-related protein LC3 (MAP1LC3A/B/C) and may assist in the maturation of autophagosomes to autolysosomes by mediating autophagosome-lysosome fusion. This is Ubiquilin-4 from Mus musculus (Mouse).